The primary structure comprises 306 residues: Embryogenic cell protein 40 (306 aa).

3 disordered regions span residues 1–57, 80–171, and 188–306; these read MADL…ASHG, AATH…GGLG, and GTGI…PTSH. Polar residues predominate over residues 12 to 23; sequence IQLTDQHGNPVQ. Low complexity predominate over residues 32 to 44; the sequence is VHITGVATTGATT. Gly residues-rich tracts occupy residues 85–119, 127–151, and 159–171; these read GSHG…GTGT, GPTG…GTGV, and GPTG…GGLG. Over residues 194–204 the composition is skewed to low complexity; that stretch reads GSAPASAGSHS. 2 stretches are compositionally biased toward basic and acidic residues: residues 205 to 218 and 243 to 259; these read HAPE…EQLH and KIKE…DEHT. Residues 260–278 are compositionally biased toward low complexity; that stretch reads TVATTKTTTAAHPGGAAVA. A compositionally biased stretch (basic and acidic residues) spans 279–298; that stretch reads VEHHEHEKKSMLDKIKDKLP.

Belongs to the plant dehydrin family.

The chain is Embryogenic cell protein 40 (ECP40) from Daucus carota (Wild carrot).